Reading from the N-terminus, the 142-residue chain is uncharacterized protein (142 aa).

2 helical membrane-spanning segments follow: residues 12-29 and 44-66; these read NAIL…YGLL and IYGQ…GVTA.

It localises to the cell membrane. This is an uncharacterized protein from Archaeoglobus fulgidus (strain ATCC 49558 / DSM 4304 / JCM 9628 / NBRC 100126 / VC-16).